Here is a 155-residue protein sequence, read N- to C-terminus: Protein-export protein SecB (155 aa).

Belongs to the SecB family. In terms of assembly, homotetramer, a dimer of dimers. One homotetramer interacts with 1 SecA dimer.

The protein resides in the cytoplasm. Its function is as follows. One of the proteins required for the normal export of preproteins out of the cell cytoplasm. It is a molecular chaperone that binds to a subset of precursor proteins, maintaining them in a translocation-competent state. It also specifically binds to its receptor SecA. The polypeptide is Protein-export protein SecB (Enterobacter sp. (strain 638)).